A 393-amino-acid chain; its full sequence is UDP-N-acetylglucosamine--N-acetylmuramyl-(pentapeptide) pyrophosphoryl-undecaprenol N-acetylglucosamine transferase (393 aa).

Residues 15 to 17 (TAG), Asn129, Arg171, Ser211, and Gln322 contribute to the UDP-N-acetyl-alpha-D-glucosamine site.

It belongs to the glycosyltransferase 28 family. MurG subfamily.

The protein localises to the cell membrane. It carries out the reaction di-trans,octa-cis-undecaprenyl diphospho-N-acetyl-alpha-D-muramoyl-L-alanyl-D-glutamyl-meso-2,6-diaminopimeloyl-D-alanyl-D-alanine + UDP-N-acetyl-alpha-D-glucosamine = di-trans,octa-cis-undecaprenyl diphospho-[N-acetyl-alpha-D-glucosaminyl-(1-&gt;4)]-N-acetyl-alpha-D-muramoyl-L-alanyl-D-glutamyl-meso-2,6-diaminopimeloyl-D-alanyl-D-alanine + UDP + H(+). The protein operates within cell wall biogenesis; peptidoglycan biosynthesis. Its function is as follows. Cell wall formation. Catalyzes the transfer of a GlcNAc subunit on undecaprenyl-pyrophosphoryl-MurNAc-pentapeptide (lipid intermediate I) to form undecaprenyl-pyrophosphoryl-MurNAc-(pentapeptide)GlcNAc (lipid intermediate II). This is UDP-N-acetylglucosamine--N-acetylmuramyl-(pentapeptide) pyrophosphoryl-undecaprenol N-acetylglucosamine transferase from Bifidobacterium longum (strain DJO10A).